The chain runs to 350 residues: Biotin synthase (350 aa).

In terms of domain architecture, Radical SAM core spans 54–278; it reads REIQLSTLLS…TMPQSYVRLS (225 aa). Cys69, Cys73, and Cys76 together coordinate [4Fe-4S] cluster. [2Fe-2S] cluster is bound by residues Cys113, Cys144, Cys204, and Arg276.

Belongs to the radical SAM superfamily. Biotin synthase family. In terms of assembly, homodimer. The cofactor is [4Fe-4S] cluster. [2Fe-2S] cluster is required as a cofactor.

It carries out the reaction (4R,5S)-dethiobiotin + (sulfur carrier)-SH + 2 reduced [2Fe-2S]-[ferredoxin] + 2 S-adenosyl-L-methionine = (sulfur carrier)-H + biotin + 2 5'-deoxyadenosine + 2 L-methionine + 2 oxidized [2Fe-2S]-[ferredoxin]. It functions in the pathway cofactor biosynthesis; biotin biosynthesis; biotin from 7,8-diaminononanoate: step 2/2. Functionally, catalyzes the conversion of dethiobiotin (DTB) to biotin by the insertion of a sulfur atom into dethiobiotin via a radical-based mechanism. The chain is Biotin synthase from Neisseria meningitidis serogroup C / serotype 2a (strain ATCC 700532 / DSM 15464 / FAM18).